The following is a 364-amino-acid chain: Eukaryotic translation initiation factor 3 subunit H (364 aa).

Positions 13–162 constitute an MPN domain; that stretch reads VQVDALVAIK…LRAYRLSPSF (150 aa).

This sequence belongs to the eIF-3 subunit H family. Component of the eukaryotic translation initiation factor 3 (eIF-3) complex.

It is found in the cytoplasm. Component of the eukaryotic translation initiation factor 3 (eIF-3) complex, which is involved in protein synthesis of a specialized repertoire of mRNAs and, together with other initiation factors, stimulates binding of mRNA and methionyl-tRNAi to the 40S ribosome. The eIF-3 complex specifically targets and initiates translation of a subset of mRNAs involved in cell proliferation. The chain is Eukaryotic translation initiation factor 3 subunit H from Phaeosphaeria nodorum (strain SN15 / ATCC MYA-4574 / FGSC 10173) (Glume blotch fungus).